The chain runs to 206 residues: MIASLRGTVINIGLSSAVIECNGVGYEVVTTPNTLSQLVRGEEALVLTTMVVREDAMKLYGFIDNESREMFSVLQTVSGLGPRLALACESVLSPLEISQAITNADAKTLQRVPGVGKRMADRLIVELKGKVAAFAAGVVDEGGEQISLPNANIASEVVVEQVSQALVGLGFSEKQSDDAVSFVLAADPSLDTSGALRAALAKLSGK.

The interval 1-63 is domain I; it reads MIASLRGTVI…EDAMKLYGFI (63 aa). Positions 64–142 are domain II; it reads DNESREMFSV…AFAAGVVDEG (79 aa). Residues 143 to 153 are flexible linker; sequence GEQISLPNANI. The tract at residues 154–206 is domain III; that stretch reads ASEVVVEQVSQALVGLGFSEKQSDDAVSFVLAADPSLDTSGALRAALAKLSGK.

The protein belongs to the RuvA family. Homotetramer. Forms an RuvA(8)-RuvB(12)-Holliday junction (HJ) complex. HJ DNA is sandwiched between 2 RuvA tetramers; dsDNA enters through RuvA and exits via RuvB. An RuvB hexamer assembles on each DNA strand where it exits the tetramer. Each RuvB hexamer is contacted by two RuvA subunits (via domain III) on 2 adjacent RuvB subunits; this complex drives branch migration. In the full resolvosome a probable DNA-RuvA(4)-RuvB(12)-RuvC(2) complex forms which resolves the HJ.

The protein resides in the cytoplasm. In terms of biological role, the RuvA-RuvB-RuvC complex processes Holliday junction (HJ) DNA during genetic recombination and DNA repair, while the RuvA-RuvB complex plays an important role in the rescue of blocked DNA replication forks via replication fork reversal (RFR). RuvA specifically binds to HJ cruciform DNA, conferring on it an open structure. The RuvB hexamer acts as an ATP-dependent pump, pulling dsDNA into and through the RuvAB complex. HJ branch migration allows RuvC to scan DNA until it finds its consensus sequence, where it cleaves and resolves the cruciform DNA. The protein is Holliday junction branch migration complex subunit RuvA of Corynebacterium glutamicum (strain ATCC 13032 / DSM 20300 / JCM 1318 / BCRC 11384 / CCUG 27702 / LMG 3730 / NBRC 12168 / NCIMB 10025 / NRRL B-2784 / 534).